The following is a 531-amino-acid chain: Transporter mfs1 (531 aa).

10 helical membrane-spanning segments follow: residues 83–103 (LVVTFDVCFLTFAVYMGSAIF), 119–139 (VPVILGLTLFVEGYAVGPLIF), 158–178 (LIVFICLQIPTALGSSLGVLL), 182–202 (FLAGVFGSPALSTGGASLADI), 214–234 (FWSLGAVGGPVLGPLLGAAMV), 241–261 (WQFWLLMMISALVLVIITFFM), 325–345 (IYIGLVYSILYLWFEAFPILF), 358–378 (LVYMGILVGSVLTVAFYFIYL), 398–418 (ILIISFPAAFFIPISLFWFGW), and 424–444 (VHWIVPIVGTLFYASGSFLLF). A glycan (N-linked (GlcNAc...) asparagine) is linked at N486. The chain crosses the membrane as a helical span at residues 496–516 (GWGSTILGVISCIMIPIPFLI).

This sequence belongs to the major facilitator superfamily. CAR1 family.

It is found in the endoplasmic reticulum. The protein localises to the membrane. This chain is Transporter mfs1 (mfs1), found in Schizosaccharomyces pombe (strain 972 / ATCC 24843) (Fission yeast).